A 226-amino-acid chain; its full sequence is Phosphoribosylformylglycinamidine synthase subunit PurQ (226 aa).

Residues 2 to 226 (KIAVIVFPGS…LENGTVIAEG (225 aa)) enclose the Glutamine amidotransferase type-1 domain. The active-site Nucleophile is the C86. Active-site residues include H195 and E197.

Part of the FGAM synthase complex composed of 1 PurL, 1 PurQ and 2 PurS subunits.

Its subcellular location is the cytoplasm. The catalysed reaction is N(2)-formyl-N(1)-(5-phospho-beta-D-ribosyl)glycinamide + L-glutamine + ATP + H2O = 2-formamido-N(1)-(5-O-phospho-beta-D-ribosyl)acetamidine + L-glutamate + ADP + phosphate + H(+). It carries out the reaction L-glutamine + H2O = L-glutamate + NH4(+). It functions in the pathway purine metabolism; IMP biosynthesis via de novo pathway; 5-amino-1-(5-phospho-D-ribosyl)imidazole from N(2)-formyl-N(1)-(5-phospho-D-ribosyl)glycinamide: step 1/2. In terms of biological role, part of the phosphoribosylformylglycinamidine synthase complex involved in the purines biosynthetic pathway. Catalyzes the ATP-dependent conversion of formylglycinamide ribonucleotide (FGAR) and glutamine to yield formylglycinamidine ribonucleotide (FGAM) and glutamate. The FGAM synthase complex is composed of three subunits. PurQ produces an ammonia molecule by converting glutamine to glutamate. PurL transfers the ammonia molecule to FGAR to form FGAM in an ATP-dependent manner. PurS interacts with PurQ and PurL and is thought to assist in the transfer of the ammonia molecule from PurQ to PurL. This Limosilactobacillus fermentum (strain NBRC 3956 / LMG 18251) (Lactobacillus fermentum) protein is Phosphoribosylformylglycinamidine synthase subunit PurQ.